The following is a 203-amino-acid chain: SOSS complex subunit B1-A (203 aa).

A DNA-binding region (OB) is located at residues 22–92 (IVLETGRVTK…TLYTGRGGDL (71 aa)). Positions 110–203 (EPNPEYIAQQ…GKESRRTGKR (94 aa)) are disordered. Residues 118-140 (QQSQSKQGQQESGTGTNNHNSSS) are compositionally biased toward low complexity. The segment covering 149–182 (ENGNGSNSSGPPAHQSTAPAHSASGRITRSQPNH) has biased composition (polar residues).

Belongs to the SOSS-B family. SOSS-B1 subfamily. Component of the SOSS complex, composed of soss-b (soss-b1/nabp2 or soss-b2/nabp1), soss-a/ints3 and soss-c/inip. SOSS complexes containing soss-b1/nabp2 are more abundant than complexes containing soss-b2/nabp1.

It localises to the nucleus. Component of the SOSS complex, a multiprotein complex that functions downstream of the MRN complex to promote DNA repair and G2/M checkpoint. In the SOSS complex, acts as a sensor of single-stranded DNA that binds to single-stranded DNA. The SOSS complex associates with DNA lesions and influences diverse endpoints in the cellular DNA damage response including cell-cycle checkpoint activation, recombinational repair and maintenance of genomic stability. Required for efficient homologous recombination-dependent repair of double-strand breaks (DSBs). This is SOSS complex subunit B1-A (nabp2-a) from Xenopus laevis (African clawed frog).